The following is a 287-amino-acid chain: 3-methyl-2-oxobutanoate hydroxymethyltransferase (287 aa).

Residues 1 to 19 (MSTLPKTLTLDTSTSRANP) show a composition bias toward polar residues. Positions 1-24 (MSTLPKTLTLDTSTSRANPTPQPM) are disordered. Positions 66 and 105 each coordinate Mg(2+). 3-methyl-2-oxobutanoate is bound by residues 66–67 (DS), Asp105, and Lys135. Glu137 contributes to the Mg(2+) binding site. Glu204 (proton acceptor) is an active-site residue.

Belongs to the PanB family. In terms of assembly, homodecamer; pentamer of dimers. It depends on Mg(2+) as a cofactor.

The protein localises to the cytoplasm. The enzyme catalyses 3-methyl-2-oxobutanoate + (6R)-5,10-methylene-5,6,7,8-tetrahydrofolate + H2O = 2-dehydropantoate + (6S)-5,6,7,8-tetrahydrofolate. It functions in the pathway cofactor biosynthesis; (R)-pantothenate biosynthesis; (R)-pantoate from 3-methyl-2-oxobutanoate: step 1/2. Catalyzes the reversible reaction in which hydroxymethyl group from 5,10-methylenetetrahydrofolate is transferred onto alpha-ketoisovalerate to form ketopantoate. The polypeptide is 3-methyl-2-oxobutanoate hydroxymethyltransferase (Sphingopyxis alaskensis (strain DSM 13593 / LMG 18877 / RB2256) (Sphingomonas alaskensis)).